A 278-amino-acid chain; its full sequence is MLAKYSSTRDMLDADGDTTMSLHSQASATSQRPELGHTEHQRPSSAWRPVALILLTLCLVLLIGLAALGLVFFQFYQLSNTQQDSILQKEEKLGNLSRQLQSLRTQNRKLAETLHHVAEKLCRELYNKTGEHRCSPCPEKWKWHGDKCYQFYKESKSWQGCEYFCIAENSTMLKINTQEVLEFAMPQSYSEFFYSYWTGLSRNSSGKAWLWMDGTPYSSELFDVMIDLTSLRSRDCVTILNGKAFSKDCRELRRCACEKAAAMVKVQSLHEPLSRRWR.

Residues 1 to 42 (MLAKYSSTRDMLDADGDTTMSLHSQASATSQRPELGHTEHQR) form a disordered region. The Cytoplasmic portion of the chain corresponds to 1–52 (MLAKYSSTRDMLDADGDTTMSLHSQASATSQRPELGHTEHQRPSSAWRPVAL). Over residues 18–32 (TTMSLHSQASATSQR) the composition is skewed to polar residues. Residues 53–73 (ILLTLCLVLLIGLAALGLVFF) traverse the membrane as a helical; Signal-anchor for type II membrane protein segment. At 74–278 (QFYQLSNTQQ…LHEPLSRRWR (205 aa)) the chain is on the extracellular side. N-linked (GlcNAc...) asparagine glycans are attached at residues Asn-95 and Asn-169. Residues 144 to 258 (HGDKCYQFYK…CRELRRCACE (115 aa)) enclose the C-type lectin domain. 2 cysteine pairs are disulfide-bonded: Cys-165–Cys-257 and Cys-236–Cys-249.

The protein localises to the membrane. The sequence is that of C-type lectin domain family 1 member A (CLEC1A) from Bos taurus (Bovine).